A 135-amino-acid chain; its full sequence is ATP synthase epsilon chain (135 aa).

The protein belongs to the ATPase epsilon chain family. F-type ATPases have 2 components, CF(1) - the catalytic core - and CF(0) - the membrane proton channel. CF(1) has five subunits: alpha(3), beta(3), gamma(1), delta(1), epsilon(1). CF(0) has three main subunits: a, b and c.

It localises to the cell inner membrane. Produces ATP from ADP in the presence of a proton gradient across the membrane. The sequence is that of ATP synthase epsilon chain from Hyphomonas neptunium (strain ATCC 15444).